Reading from the N-terminus, the 420-residue chain is UDP-N-acetylglucosamine 1-carboxyvinyltransferase (420 aa).

Phosphoenolpyruvate is bound at residue K22 to N23. R92 contributes to the UDP-N-acetyl-alpha-D-glucosamine binding site. C116 acts as the Proton donor in catalysis. C116 is modified (2-(S-cysteinyl)pyruvic acid O-phosphothioketal). Residues R121 to L125, K161 to V164, D306, and I328 each bind UDP-N-acetyl-alpha-D-glucosamine.

The protein belongs to the EPSP synthase family. MurA subfamily.

The protein localises to the cytoplasm. It catalyses the reaction phosphoenolpyruvate + UDP-N-acetyl-alpha-D-glucosamine = UDP-N-acetyl-3-O-(1-carboxyvinyl)-alpha-D-glucosamine + phosphate. Its pathway is cell wall biogenesis; peptidoglycan biosynthesis. Cell wall formation. Adds enolpyruvyl to UDP-N-acetylglucosamine. The protein is UDP-N-acetylglucosamine 1-carboxyvinyltransferase of Yersinia pseudotuberculosis serotype O:1b (strain IP 31758).